Consider the following 118-residue polypeptide: NAD(P)H-quinone oxidoreductase subunit M (118 aa).

Belongs to the complex I NdhM subunit family. NDH-1 can be composed of about 15 different subunits; different subcomplexes with different compositions have been identified which probably have different functions.

It is found in the cellular thylakoid membrane. It carries out the reaction a plastoquinone + NADH + (n+1) H(+)(in) = a plastoquinol + NAD(+) + n H(+)(out). The catalysed reaction is a plastoquinone + NADPH + (n+1) H(+)(in) = a plastoquinol + NADP(+) + n H(+)(out). Its function is as follows. NDH-1 shuttles electrons from an unknown electron donor, via FMN and iron-sulfur (Fe-S) centers, to quinones in the respiratory and/or the photosynthetic chain. The immediate electron acceptor for the enzyme in this species is believed to be plastoquinone. Couples the redox reaction to proton translocation, and thus conserves the redox energy in a proton gradient. Cyanobacterial NDH-1 also plays a role in inorganic carbon-concentration. This chain is NAD(P)H-quinone oxidoreductase subunit M, found in Rippkaea orientalis (strain PCC 8801 / RF-1) (Cyanothece sp. (strain PCC 8801)).